A 144-amino-acid polypeptide reads, in one-letter code: uncharacterized protein (144 aa).

Transmembrane regions (helical) follow at residues Phe7–Val29, Val51–Val73, Ala85–Phe107, and His122–Val139.

It localises to the cell membrane. This is an uncharacterized protein from Treponema pallidum (strain Nichols).